Here is a 465-residue protein sequence, read N- to C-terminus: 3-isopropylmalate dehydratase large subunit (465 aa).

Residues cysteine 347, cysteine 407, and cysteine 410 each contribute to the [4Fe-4S] cluster site.

Belongs to the aconitase/IPM isomerase family. LeuC type 1 subfamily. As to quaternary structure, heterodimer of LeuC and LeuD. [4Fe-4S] cluster serves as cofactor.

The catalysed reaction is (2R,3S)-3-isopropylmalate = (2S)-2-isopropylmalate. It participates in amino-acid biosynthesis; L-leucine biosynthesis; L-leucine from 3-methyl-2-oxobutanoate: step 2/4. Functionally, catalyzes the isomerization between 2-isopropylmalate and 3-isopropylmalate, via the formation of 2-isopropylmaleate. This Tolumonas auensis (strain DSM 9187 / NBRC 110442 / TA 4) protein is 3-isopropylmalate dehydratase large subunit.